A 135-amino-acid polypeptide reads, in one-letter code: Small ribosomal subunit protein uS11 (135 aa).

Positions 1-20 (MGRQRQQRSRGSRSRRRVRK) are disordered.

The protein belongs to the universal ribosomal protein uS11 family. In terms of assembly, part of the 30S ribosomal subunit. Interacts with proteins S7 and S18. Binds to IF-3.

Functionally, located on the platform of the 30S subunit, it bridges several disparate RNA helices of the 16S rRNA. Forms part of the Shine-Dalgarno cleft in the 70S ribosome. This chain is Small ribosomal subunit protein uS11, found in Rubrobacter xylanophilus (strain DSM 9941 / JCM 11954 / NBRC 16129 / PRD-1).